Here is a 335-residue protein sequence, read N- to C-terminus: Heat-inducible transcription repressor HrcA (335 aa).

This sequence belongs to the HrcA family.

Functionally, negative regulator of class I heat shock genes (grpE-dnaK-dnaJ and groELS operons). Prevents heat-shock induction of these operons. The chain is Heat-inducible transcription repressor HrcA from Mesomycoplasma hyopneumoniae (strain 232) (Mycoplasma hyopneumoniae).